Reading from the N-terminus, the 309-residue chain is tRNA-cytidine(32) 2-sulfurtransferase (309 aa).

The PP-loop motif signature appears at 45–50 (SGGKDS). 3 residues coordinate [4Fe-4S] cluster: C120, C123, and C211.

This sequence belongs to the TtcA family. Homodimer. Mg(2+) serves as cofactor. [4Fe-4S] cluster is required as a cofactor.

The protein localises to the cytoplasm. The enzyme catalyses cytidine(32) in tRNA + S-sulfanyl-L-cysteinyl-[cysteine desulfurase] + AH2 + ATP = 2-thiocytidine(32) in tRNA + L-cysteinyl-[cysteine desulfurase] + A + AMP + diphosphate + H(+). Its pathway is tRNA modification. Its function is as follows. Catalyzes the ATP-dependent 2-thiolation of cytidine in position 32 of tRNA, to form 2-thiocytidine (s(2)C32). The sulfur atoms are provided by the cysteine/cysteine desulfurase (IscS) system. The chain is tRNA-cytidine(32) 2-sulfurtransferase from Psychromonas ingrahamii (strain DSM 17664 / CCUG 51855 / 37).